The sequence spans 480 residues: NADH-quinone oxidoreductase subunit N (480 aa).

14 helical membrane-spanning segments follow: residues 12 to 32 (LLIP…LGVF), 41 to 61 (LVQW…LFLV), 80 to 100 (FSKT…MPYL), 105 to 125 (LGKI…MMMV), 130 to 150 (LIAM…LAAF), 165 to 185 (FVLG…VYGF), 204 to 224 (IGLT…VSAA), 237 to 257 (APTP…IVLL), 275 to 295 (VIWM…LTQQ), 300 to 320 (LMAY…AAAS), 326 to 346 (ALLV…ATIL), 372 to 392 (GWSM…VGFF), 406 to 428 (LMIL…LRIV), and 450 to 470 (IARI…WLVF).

It belongs to the complex I subunit 2 family. As to quaternary structure, NDH-1 is composed of 14 different subunits. Subunits NuoA, H, J, K, L, M, N constitute the membrane sector of the complex.

The protein resides in the cell inner membrane. It carries out the reaction a quinone + NADH + 5 H(+)(in) = a quinol + NAD(+) + 4 H(+)(out). NDH-1 shuttles electrons from NADH, via FMN and iron-sulfur (Fe-S) centers, to quinones in the respiratory chain. The immediate electron acceptor for the enzyme in this species is believed to be ubiquinone. Couples the redox reaction to proton translocation (for every two electrons transferred, four hydrogen ions are translocated across the cytoplasmic membrane), and thus conserves the redox energy in a proton gradient. This is NADH-quinone oxidoreductase subunit N from Maricaulis maris (strain MCS10) (Caulobacter maris).